Consider the following 447-residue polypeptide: Blue-light photoreceptor PHR2 (447 aa).

Positions 1 to 14 (MDSSNVEENLNPET) are enriched in polar residues. The segment at 1–20 (MDSSNVEENLNPETKSAEEQ) is disordered. One can recognise a Photolyase/cryptochrome alpha/beta domain in the interval 115–249 (RAAVVWFRND…EVKYFWGSTL (135 aa)).

It belongs to the DNA photolyase class-1 family. Requires FAD as cofactor.

This is Blue-light photoreceptor PHR2 (PHR2) from Arabidopsis thaliana (Mouse-ear cress).